We begin with the raw amino-acid sequence, 394 residues long: MDAATLTYDSLRFGEIEDFPETSDPVWILGKQFSALTEKDDILADVTSRLWFTYRKNFQPIGGTGPTSDTGWGCMLRCGQMILGEALICRHLGRDWKWSPGQRQRPEYVSILNAFIDKKDSYYSIHQIAQMGVGEGKSIGQWYGPNTVAQVLKKLAVFDSWSRLAVHVAMDNTVVIEEIKRLCMPWLDFDRGACAVSEEPREMNGDLEGACALAEEETALWKPLVLLIPLRLGLSDINEAYIEPLKQCFMMPQSLGVIGGKPNSAHYFIGFVGDELIYLDPHTTQPAVDPSEDGHFPDDSYHCQHPPCRMHICELDPSIAAGFFCQTEDDFDDWCAQIRKVSNCRGLPMFELVDSQPSHLITADVLNLTPDFSDSDRLERFFDSEDEEFEILSL.

The active-site Nucleophile is the Cys74. Residues Asp280 and His282 contribute to the active site. The LIR signature appears at 389–392 (FEIL).

It belongs to the peptidase C54 family.

The protein resides in the cytoplasm. The protein localises to the cytosol. Its subcellular location is the cytoplasmic vesicle. It is found in the autophagosome. It localises to the endoplasmic reticulum. The protein resides in the mitochondrion. The catalysed reaction is [protein]-C-terminal L-amino acid-glycyl-phosphatidylethanolamide + H2O = [protein]-C-terminal L-amino acid-glycine + a 1,2-diacyl-sn-glycero-3-phosphoethanolamine. The enzyme catalyses [protein]-C-terminal L-amino acid-glycyl-phosphatidylserine + H2O = [protein]-C-terminal L-amino acid-glycine + a 1,2-diacyl-sn-glycero-3-phospho-L-serine. Its function is as follows. Cysteine protease that plays a key role in autophagy by mediating both proteolytic activation and delipidation of ATG8 family proteins. Required for canonical autophagy (macroautophagy), non-canonical autophagy as well as for mitophagy. The protease activity is required for proteolytic activation of ATG8 family proteins: cleaves the C-terminal amino acid of ATG8 proteins to reveal a C-terminal glycine. Exposure of the glycine at the C-terminus is essential for ATG8 proteins conjugation to phosphatidylethanolamine (PE) and insertion to membranes, which is necessary for autophagy. Protease activity is also required to counteract formation of high-molecular weight conjugates of ATG8 proteins (ATG8ylation): acts as a deubiquitinating-like enzyme that removes ATG8 conjugated to other proteins, such as ATG3. In addition to the protease activity, also mediates delipidation of ATG8 family proteins. Catalyzes delipidation of PE-conjugated forms of ATG8 proteins during macroautophagy. Also involved in non-canonical autophagy, a parallel pathway involving conjugation of ATG8 proteins to single membranes at endolysosomal compartments, by catalyzing delipidation of ATG8 proteins conjugated to phosphatidylserine (PS). The sequence is that of Cysteine protease ATG4B from Danio rerio (Zebrafish).